Reading from the N-terminus, the 319-residue chain is Ferrochelatase (319 aa).

Fe cation-binding residues include H192 and E271.

This sequence belongs to the ferrochelatase family.

It localises to the cytoplasm. It catalyses the reaction heme b + 2 H(+) = protoporphyrin IX + Fe(2+). It participates in porphyrin-containing compound metabolism; protoheme biosynthesis; protoheme from protoporphyrin-IX: step 1/1. Catalyzes the ferrous insertion into protoporphyrin IX. The chain is Ferrochelatase from Geotalea uraniireducens (strain Rf4) (Geobacter uraniireducens).